The following is a 2163-amino-acid chain: Myosin-VIIa (2163 aa).

A Myosin motor domain is found at glutamine 58 to aspartate 728. An ATP-binding site is contributed by glycine 151–threonine 158. Actin-binding stretches follow at residues leucine 607–glutamate 629 and glutamine 707–leucine 721. IQ domains are found at residues leucine 731–arginine 753, methionine 754–arginine 783, leucine 800–leucine 822, and lysine 823–arginine 852. Residues arginine 886–aspartate 914 are a coiled coil. Residues proline 937–leucine 958 are disordered. Residues tyrosine 1003–lysine 1239 form the MyTH4 1 domain. The FERM 1 domain occupies isoleucine 1244 to serine 1554. In terms of domain architecture, SH3 spans lysine 1552–serine 1621. The region spanning tyrosine 1697–glutamine 1845 is the MyTH4 2 domain. The region spanning isoleucine 1851–methionine 2154 is the FERM 2 domain.

The protein belongs to the TRAFAC class myosin-kinesin ATPase superfamily. Myosin family. In terms of assembly, homodimerizes in a two headed molecule through the formation of a coiled-coil rod.

It localises to the cytoplasm. Myosins are actin-based motor molecules with ATPase activity. Unconventional myosins serve in intracellular movements: can function in cells as a single-molecule cargo transporter. A very slow and high-duty-ratio motor, may be suitable for tension maintenance of actin filaments. Their highly divergent tails are presumed to bind to membranous compartments, which would be moved relative to actin filaments. Plays a key role in the formation of cellular projections and other actin-based functions required for embryonic and larval viability. Necessary for auditory transduction: plays a role in Johnston organ (JO) organization by functioning in scolopidial apical attachment and therefore to acoustic stimulus propagation from the antenna a2/a3 joint to transducing elements. This chain is Myosin-VIIa, found in Aedes aegypti (Yellowfever mosquito).